A 325-amino-acid polypeptide reads, in one-letter code: Olfactory receptor 5T18 (325 aa).

The Extracellular portion of the chain corresponds to 1-22 (MRNITEATFFVLKGLTDNNELQ). Residue asparagine 3 is glycosylated (N-linked (GlcNAc...) asparagine). The next 2 helical transmembrane spans lie at 23-43 (IILF…NVGL) and 44-64 (IILV…LSVL). At 65 to 97 (SSVDACYSTDITPNMLVGFMSKSKIISFYGCAT) the chain is on the extracellular side. Cysteines 95 and 187 form a disulfide. Residues 98 to 118 (QMFLAVTFGTTECFLLAAMAY) form a helical membrane-spanning segment. Over 119–139 (DRYVAIHDPLLYAVSMSPRVY) the chain is Cytoplasmic. A helical membrane pass occupies residues 140-160 (IPLIIASYAGGIVHAIIHTVA). Residues 161-194 (TFSLSFCRSNEVKHIFCDIPPLLAISCSETYVNE) lie on the Extracellular side of the membrane. A helical transmembrane segment spans residues 195–215 (LLLFFFVSFIELVTILIVLVS). Topologically, residues 216-234 (YAFILLSILKMNSSEGRRK) are cytoplasmic. A helical membrane pass occupies residues 235-255 (VFSTCGAHLTAVSIYYGTILF). The Extracellular portion of the chain corresponds to 256-269 (MYVRPSSNYSLEHD). A helical transmembrane segment spans residues 270-290 (MIVSTFYTIGIPMLNPIIYSL). Over 291–325 (RNKDVKEAMKRVLRKKINIKHRIKKLNDFSVFLMP) the chain is Cytoplasmic.

Belongs to the G-protein coupled receptor 1 family.

It localises to the cell membrane. In terms of biological role, potential odorant receptor. This is Olfactory receptor 5T18 from Mus musculus (Mouse).